A 567-amino-acid chain; its full sequence is Lactase-like protein (567 aa).

Residues 1 to 21 (MKPVWVATLLWMLLLVPRLGA) form the signal peptide. At 23–541 (RKGSPEEASF…LLSHMQMVTE (519 aa)) the chain is on the extracellular side. Residues asparagine 80, asparagine 171, and asparagine 245 are each glycosylated (N-linked (GlcNAc...) asparagine). The helical transmembrane segment at 542-562 (IVVPTVCSLCVLITAVLLMLL) threads the bilayer. Topologically, residues 563–567 (LRRQS) are cytoplasmic.

The protein belongs to the glycosyl hydrolase 1 family. Klotho subfamily. May form dimers.

It localises to the endoplasmic reticulum membrane. Its function is as follows. Plays a role in formation of the lens suture in the eye, which is important for normal optical properties of the lens. In Homo sapiens (Human), this protein is Lactase-like protein (LCTL).